We begin with the raw amino-acid sequence, 1151 residues long: uncharacterized protein (1151 aa).

Disordered stretches follow at residues Phe611–Glu633, Asn709–Val740, Pro753–Leu778, Pro795–Leu880, and Leu1060–Glu1151. Composition is skewed to pro residues over residues Pro754–Pro773 and Ile811–Pro842. The span at Pro867–Pro878 shows a compositional bias: low complexity. Positions Glu1082–Asp1091 are enriched in acidic residues. Over residues Pro1131–Thr1142 the composition is skewed to polar residues.

This is an uncharacterized protein from Ostreid herpesvirus 1 (isolate France) (OsHV-1).